Consider the following 652-residue polypeptide: Iron-regulated outer membrane virulence protein (652 aa).

An N-terminal signal peptide occupies residues 1–25 (MSRFNPSPVSLSVTLGLMFSASAFA). Residues 33-40 (ETMVVTAA) carry the TonB box motif. The 118-residue stretch at 45 to 162 (VIQNAPASIS…IGGVINIITR (118 aa)) folds into the TBDR plug domain. Residues 167-652 (QWSGNVQLST…RYWLGLDIAF (486 aa)) form the TBDR beta-barrel domain. The short motif at 635–652 (YGYVEDGRRYWLGLDIAF) is the TonB C-terminal box element.

Belongs to the TonB-dependent receptor family.

The protein localises to the cell outer membrane. Its function is as follows. Involved in the initial step of iron uptake by binding ferric vibriobactin, an iron chelatin siderophore that allows V.cholerae to extract iron from the environment. The sequence is that of Iron-regulated outer membrane virulence protein (irgA) from Vibrio cholerae serotype O1 (strain ATCC 39541 / Classical Ogawa 395 / O395).